The sequence spans 127 residues: Aspartate 1-decarboxylase (127 aa).

Ser-25 functions as the Schiff-base intermediate with substrate; via pyruvic acid in the catalytic mechanism. Ser-25 carries the post-translational modification Pyruvic acid (Ser). Thr-57 lines the substrate pocket. The active-site Proton donor is Tyr-58. Residue 73 to 75 (GAA) coordinates substrate.

It belongs to the PanD family. As to quaternary structure, heterooctamer of four alpha and four beta subunits. The cofactor is pyruvate. Is synthesized initially as an inactive proenzyme, which is activated by self-cleavage at a specific serine bond to produce a beta-subunit with a hydroxyl group at its C-terminus and an alpha-subunit with a pyruvoyl group at its N-terminus.

It is found in the cytoplasm. It catalyses the reaction L-aspartate + H(+) = beta-alanine + CO2. The protein operates within cofactor biosynthesis; (R)-pantothenate biosynthesis; beta-alanine from L-aspartate: step 1/1. In terms of biological role, catalyzes the pyruvoyl-dependent decarboxylation of aspartate to produce beta-alanine. The chain is Aspartate 1-decarboxylase from Listeria monocytogenes serotype 4b (strain F2365).